A 117-amino-acid chain; its full sequence is Large ribosomal subunit protein bL19 (117 aa).

Belongs to the bacterial ribosomal protein bL19 family.

In terms of biological role, this protein is located at the 30S-50S ribosomal subunit interface and may play a role in the structure and function of the aminoacyl-tRNA binding site. This chain is Large ribosomal subunit protein bL19, found in Proteus mirabilis (strain HI4320).